The primary structure comprises 246 residues: Sec-independent protein translocase protein TatB (246 aa).

A helical transmembrane segment spans residues 1-21 (MFDIGWSELLVIAVVLIVVVG). 3 disordered regions span residues 94–122 (SDLQKATSPSDGLSSTAAPATSEPVAPLV), 179–204 (SRSKAVATPETTVATNASEPASPKPT), and 225–246 (VADAKPAKAARTKAAKPKKDEA). Polar residues-rich tracts occupy residues 97–112 (QKATSPSDGLSSTAAP) and 187–197 (PETTVATNASE).

This sequence belongs to the TatB family. As to quaternary structure, the Tat system comprises two distinct complexes: a TatABC complex, containing multiple copies of TatA, TatB and TatC subunits, and a separate TatA complex, containing only TatA subunits. Substrates initially bind to the TatABC complex, which probably triggers association of the separate TatA complex to form the active translocon.

It localises to the cell inner membrane. Functionally, part of the twin-arginine translocation (Tat) system that transports large folded proteins containing a characteristic twin-arginine motif in their signal peptide across membranes. Together with TatC, TatB is part of a receptor directly interacting with Tat signal peptides. TatB may form an oligomeric binding site that transiently accommodates folded Tat precursor proteins before their translocation. The sequence is that of Sec-independent protein translocase protein TatB from Agrobacterium fabrum (strain C58 / ATCC 33970) (Agrobacterium tumefaciens (strain C58)).